The sequence spans 230 residues: MEKIKVKEIFSNVYGVDLGDGLKRIATKSLAPGKRVYGEKLIYSENKEYRIWNPNKSKLGAAIINGLKKMPIKKGTKVLYLGASAGTTPSHVSDISEDTIVYAVEFAPRIMREFIDSCNERINLIPILGDANRPFEYSNIVGKVDVIFEDVAQPNQAEILVKNAKWFLNKDGYAMISIKARSIDVTKNPKEIFLEQKKILIEGGFDIVDEINIEPFEKDHIMFVGIWKGN.

Residues 87–88 (TT), 105–106 (EF), 130–131 (DA), and 150–153 (DVAQ) each bind S-adenosyl-L-methionine.

The protein belongs to the methyltransferase superfamily. Fibrillarin family. Interacts with nop5. Component of box C/D small ribonucleoprotein (sRNP) particles that contain rpl7ae, FlpA and nop5, plus a guide RNA.

Its function is as follows. Involved in pre-rRNA and tRNA processing. Utilizes the methyl donor S-adenosyl-L-methionine to catalyze the site-specific 2'-hydroxyl methylation of ribose moieties in rRNA and tRNA. Site specificity is provided by a guide RNA that base pairs with the substrate. Methylation occurs at a characteristic distance from the sequence involved in base pairing with the guide RNA. The sequence is that of Fibrillarin-like rRNA/tRNA 2'-O-methyltransferase from Methanococcus vannielii (strain ATCC 35089 / DSM 1224 / JCM 13029 / OCM 148 / SB).